A 194-amino-acid polypeptide reads, in one-letter code: 7-methyl-GTP pyrophosphatase (194 aa).

Aspartate 70 serves as the catalytic Proton acceptor.

The protein belongs to the Maf family. YceF subfamily. Requires a divalent metal cation as cofactor.

Its subcellular location is the cytoplasm. It carries out the reaction N(7)-methyl-GTP + H2O = N(7)-methyl-GMP + diphosphate + H(+). In terms of biological role, nucleoside triphosphate pyrophosphatase that hydrolyzes 7-methyl-GTP (m(7)GTP). May have a dual role in cell division arrest and in preventing the incorporation of modified nucleotides into cellular nucleic acids. This Vibrio vulnificus (strain YJ016) protein is 7-methyl-GTP pyrophosphatase.